The following is a 213-amino-acid chain: Protein-L-isoaspartate O-methyltransferase (213 aa).

Residue Ser58 is part of the active site.

This sequence belongs to the methyltransferase superfamily. L-isoaspartyl/D-aspartyl protein methyltransferase family.

The protein localises to the cytoplasm. The catalysed reaction is [protein]-L-isoaspartate + S-adenosyl-L-methionine = [protein]-L-isoaspartate alpha-methyl ester + S-adenosyl-L-homocysteine. Its function is as follows. Catalyzes the methyl esterification of L-isoaspartyl residues in peptides and proteins that result from spontaneous decomposition of normal L-aspartyl and L-asparaginyl residues. It plays a role in the repair and/or degradation of damaged proteins. The polypeptide is Protein-L-isoaspartate O-methyltransferase (Chlorobaculum tepidum (strain ATCC 49652 / DSM 12025 / NBRC 103806 / TLS) (Chlorobium tepidum)).